The following is a 660-amino-acid chain: Solute carrier family 5 member 4B (660 aa).

At 1-27 the chain is on the cytoplasmic side; that stretch reads MASTLSPSITPQTEEPPVVPVRIQNAA. The chain crosses the membrane as a helical span at residues 28 to 48; it reads DISVIVIYFIVVLAVGLWSMV. The Extracellular portion of the chain corresponds to 49-54; sequence RSNRGT. The helical transmembrane segment at 55-75 threads the bilayer; it reads VGGFFLAGHDMAWWPMGASLF. Residues 76 to 82 lie on the Cytoplasmic side of the membrane; that stretch reads ASNIGSN. A helical membrane pass occupies residues 83 to 103; sequence HFVGLAGTGAASGIAIAAVEW. Topologically, residues 104–105 are extracellular; it reads NA. Residues 106–126 traverse the membrane as a helical segment; it reads LLMVLVLGWVFLPIYIKAGVL. At 127–142 the chain is on the cytoplasmic side; sequence TMPEYLRKRFGGKRLQ. Residues 143-163 traverse the membrane as a helical segment; it reads IYLSVLSLFIMVALQTSSIIF. At 164–166 the chain is on the extracellular side; sequence SGA. A helical transmembrane segment spans residues 167-187; the sequence is IFIQLALGLNLYLAVFILLAI. Over 188 to 208 the chain is Cytoplasmic; it reads TAFYTVAGGLASVIYTDSVQT. Residues 209–229 traverse the membrane as a helical segment; that stretch reads FIMLLGSLILMGFAFAEVGGY. Topologically, residues 230–277 are extracellular; that stretch reads ESFTEKYMNAIPSVVEGDNLTISPKCYTPQPDSFHVFRDPVTGDIPWP. Residues 278–298 form a helical membrane-spanning segment; sequence GLIFGMTILAIWYWCADQVIV. Topologically, residues 299–313 are cytoplasmic; sequence QRCLCGKNMSHVKAA. A helical transmembrane segment spans residues 314 to 334; sequence CILCGYLKLLPMFLMVMPGMI. The Extracellular segment spans residues 335–380; that stretch reads SRILYTDKVACVVPSECEKQCGTAVGCTNYAYPTLVLELMPDGLRG. Residues 381–401 form a helical membrane-spanning segment; sequence LMLSVMLASLMSSLTSIFNSA. Over 402-423 the chain is Cytoplasmic; it reads STLFTIDLYTKIRKKASERELM. A helical transmembrane segment spans residues 424–444; sequence IAGRIFGMVLIAVSILWVPLV. Over 445-455 the chain is Extracellular; it reads QVSQNGQLFHY. The chain crosses the membrane as a helical span at residues 456–476; that stretch reads IGSVSSYLGPPLGAVFMLAIF. Residues 477–484 are Cytoplasmic-facing; the sequence is FKRVNEQG. A helical transmembrane segment spans residues 485–505; sequence AFWGLMVGLVVGLIRLIAEFV. The Extracellular portion of the chain corresponds to 506 to 526; sequence YGTGSCVAPSNCPKIICGVHY. A helical transmembrane segment spans residues 527–547; the sequence is MYFAIILFFVSIIVILGVSFL. At 548 to 639 the chain is on the cytoplasmic side; sequence TEPIPDVHLY…DTSEKPLWRT (92 aa). A helical transmembrane segment spans residues 640–660; sequence VMNINAVLLLGVAVFVHAYFA.

It belongs to the sodium:solute symporter (SSF) (TC 2.A.21) family. In terms of tissue distribution, expressed in small intestine. Expressed in kidney.

The protein resides in the cell membrane. It catalyses the reaction D-glucose(out) + 2 Na(+)(out) = D-glucose(in) + 2 Na(+)(in). Its activity is regulated as follows. Inhibited by phlorizin. In terms of biological role, low-affinity sodium/D-glucose symporter. Generates D-glucose-induced depolarization in a pH-independent manner. The polypeptide is Solute carrier family 5 member 4B (Mus musculus (Mouse)).